We begin with the raw amino-acid sequence, 342 residues long: Central glycolytic genes regulator (342 aa).

Residues Arg-37–Thr-56 constitute a DNA-binding region (H-T-H motif).

The protein belongs to the SorC transcriptional regulatory family. Homotetramer.

In terms of biological role, in the absence of glucose, represses the transcription of the gapA operon, which encodes five key glycolytic enzymes. The sequence is that of Central glycolytic genes regulator (cggR) from Priestia megaterium (strain DSM 319 / IMG 1521) (Bacillus megaterium).